The primary structure comprises 232 residues: Pyridoxine 5'-phosphate synthase (232 aa).

Asparagine 7 serves as a coordination point for 3-amino-2-oxopropyl phosphate. 9–10 (DH) lines the 1-deoxy-D-xylulose 5-phosphate pocket. A 3-amino-2-oxopropyl phosphate-binding site is contributed by arginine 18. Catalysis depends on histidine 43, which acts as the Proton acceptor. Positions 45 and 50 each coordinate 1-deoxy-D-xylulose 5-phosphate. Glutamate 69 serves as the catalytic Proton acceptor. Threonine 99 is a 1-deoxy-D-xylulose 5-phosphate binding site. Residue histidine 185 is the Proton donor of the active site. 3-amino-2-oxopropyl phosphate is bound by residues glycine 186 and 207-208 (GH).

It belongs to the PNP synthase family. Homooctamer; tetramer of dimers.

It is found in the cytoplasm. It catalyses the reaction 3-amino-2-oxopropyl phosphate + 1-deoxy-D-xylulose 5-phosphate = pyridoxine 5'-phosphate + phosphate + 2 H2O + H(+). It participates in cofactor biosynthesis; pyridoxine 5'-phosphate biosynthesis; pyridoxine 5'-phosphate from D-erythrose 4-phosphate: step 5/5. Catalyzes the complicated ring closure reaction between the two acyclic compounds 1-deoxy-D-xylulose-5-phosphate (DXP) and 3-amino-2-oxopropyl phosphate (1-amino-acetone-3-phosphate or AAP) to form pyridoxine 5'-phosphate (PNP) and inorganic phosphate. This is Pyridoxine 5'-phosphate synthase from Gluconobacter oxydans (strain 621H) (Gluconobacter suboxydans).